A 901-amino-acid chain; its full sequence is Protein translocase subunit SecA (901 aa).

ATP contacts are provided by residues Gln-85, 103–107 (GEGKT), and Asp-510. A disordered region spans residues 848–901 (RINQNNLPVDENSQTTQNSETEDYSDRRIGRNEPCPCGSGKKYKHCHGSRVARQ). The span at 849 to 866 (INQNNLPVDENSQTTQNS) shows a compositional bias: polar residues. Zn(2+) contacts are provided by Cys-882, Cys-884, Cys-893, and His-894. The segment covering 888-901 (KKYKHCHGSRVARQ) has biased composition (basic residues).

Belongs to the SecA family. As to quaternary structure, monomer and homodimer. Part of the essential Sec protein translocation apparatus which comprises SecA, SecYEG and auxiliary proteins SecDF-YajC and YidC. The cofactor is Zn(2+).

It localises to the cell inner membrane. The protein resides in the cytoplasm. The catalysed reaction is ATP + H2O + cellular proteinSide 1 = ADP + phosphate + cellular proteinSide 2.. Functionally, part of the Sec protein translocase complex. Interacts with the SecYEG preprotein conducting channel. Has a central role in coupling the hydrolysis of ATP to the transfer of proteins into and across the cell membrane, serving both as a receptor for the preprotein-SecB complex and as an ATP-driven molecular motor driving the stepwise translocation of polypeptide chains across the membrane. In Haemophilus influenzae (strain 86-028NP), this protein is Protein translocase subunit SecA.